A 124-amino-acid polypeptide reads, in one-letter code: MSRVPDNLYYTKSHEWFLIENGVATVGITDYAQHQLTDIVYVDFPKNGEHKNKGETLLTIESVKSAEDVYSPVTGEIIEINRDLESKPELINEDPYKNWLVKIRLSNDNFDGMSGEEYKKYIGE.

The 82-residue stretch at 23 to 104 (VATVGITDYA…PYKNWLVKIR (82 aa)) folds into the Lipoyl-binding domain. Lysine 64 is modified (N6-lipoyllysine).

The protein belongs to the GcvH family. As to quaternary structure, the glycine cleavage system is composed of four proteins: P, T, L and H. It depends on (R)-lipoate as a cofactor.

In terms of biological role, the glycine cleavage system catalyzes the degradation of glycine. The H protein shuttles the methylamine group of glycine from the P protein to the T protein. The polypeptide is Probable glycine cleavage system H protein (Picrophilus torridus (strain ATCC 700027 / DSM 9790 / JCM 10055 / NBRC 100828 / KAW 2/3)).